The sequence spans 487 residues: Siroheme synthase (487 aa).

Residues 1 to 203 form a precorrin-2 dehydrogenase /sirohydrochlorin ferrochelatase region; sequence MNTFPLFFKL…GRSVEAEQAL (203 aa). NAD(+)-binding positions include 22–23 and 43–44; these read EV and PQ. Phosphoserine is present on Ser128. Residues 229-487 form a uroporphyrinogen-III C-methyltransferase region; the sequence is GEVYIVGAGP…DQQAHALNML (259 aa). Position 238 (Pro238) interacts with S-adenosyl-L-methionine. Catalysis depends on Asp261, which acts as the Proton acceptor. Lys283 functions as the Proton donor in the catalytic mechanism. S-adenosyl-L-methionine-binding positions include 314–316, Val319, 344–345, Met396, and Ala425; these read GGD and TA.

In the N-terminal section; belongs to the precorrin-2 dehydrogenase / sirohydrochlorin ferrochelatase family. This sequence in the C-terminal section; belongs to the precorrin methyltransferase family.

The catalysed reaction is uroporphyrinogen III + 2 S-adenosyl-L-methionine = precorrin-2 + 2 S-adenosyl-L-homocysteine + H(+). It catalyses the reaction precorrin-2 + NAD(+) = sirohydrochlorin + NADH + 2 H(+). The enzyme catalyses siroheme + 2 H(+) = sirohydrochlorin + Fe(2+). It participates in cofactor biosynthesis; adenosylcobalamin biosynthesis; precorrin-2 from uroporphyrinogen III: step 1/1. Its pathway is cofactor biosynthesis; adenosylcobalamin biosynthesis; sirohydrochlorin from precorrin-2: step 1/1. The protein operates within porphyrin-containing compound metabolism; siroheme biosynthesis; precorrin-2 from uroporphyrinogen III: step 1/1. It functions in the pathway porphyrin-containing compound metabolism; siroheme biosynthesis; siroheme from sirohydrochlorin: step 1/1. It participates in porphyrin-containing compound metabolism; siroheme biosynthesis; sirohydrochlorin from precorrin-2: step 1/1. Multifunctional enzyme that catalyzes the SAM-dependent methylations of uroporphyrinogen III at position C-2 and C-7 to form precorrin-2 via precorrin-1. Then it catalyzes the NAD-dependent ring dehydrogenation of precorrin-2 to yield sirohydrochlorin. Finally, it catalyzes the ferrochelation of sirohydrochlorin to yield siroheme. The sequence is that of Siroheme synthase from Psychrobacter sp. (strain PRwf-1).